We begin with the raw amino-acid sequence, 371 residues long: Ferrochelatase (371 aa).

2 residues coordinate Fe cation: His-218 and Glu-299.

The protein belongs to the ferrochelatase family.

The protein resides in the cytoplasm. The catalysed reaction is heme b + 2 H(+) = protoporphyrin IX + Fe(2+). It participates in porphyrin-containing compound metabolism; protoheme biosynthesis; protoheme from protoporphyrin-IX: step 1/1. Catalyzes the ferrous insertion into protoporphyrin IX. In Cupriavidus pinatubonensis (strain JMP 134 / LMG 1197) (Cupriavidus necator (strain JMP 134)), this protein is Ferrochelatase.